A 203-amino-acid polypeptide reads, in one-letter code: Probable chemoreceptor glutamine deamidase CheD (203 aa).

It belongs to the CheD family.

The enzyme catalyses L-glutaminyl-[protein] + H2O = L-glutamyl-[protein] + NH4(+). Functionally, probably deamidates glutamine residues to glutamate on methyl-accepting chemotaxis receptors (MCPs), playing an important role in chemotaxis. The chain is Probable chemoreceptor glutamine deamidase CheD from Herminiimonas arsenicoxydans.